Reading from the N-terminus, the 219-residue chain is uncharacterized protein (219 aa).

Residues Val-13 to Phe-32 form a helical membrane-spanning segment.

It is found in the membrane. This is an uncharacterized protein from Aquifex aeolicus (strain VF5).